Consider the following 449-residue polypeptide: Methylenetetrahydrofolate--tRNA-(uracil-5-)-methyltransferase TrmFO (449 aa).

9–14 (GGGMAG) is a binding site for FAD.

It belongs to the MnmG family. TrmFO subfamily. FAD serves as cofactor.

It localises to the cytoplasm. The catalysed reaction is uridine(54) in tRNA + (6R)-5,10-methylene-5,6,7,8-tetrahydrofolate + NADH + H(+) = 5-methyluridine(54) in tRNA + (6S)-5,6,7,8-tetrahydrofolate + NAD(+). It carries out the reaction uridine(54) in tRNA + (6R)-5,10-methylene-5,6,7,8-tetrahydrofolate + NADPH + H(+) = 5-methyluridine(54) in tRNA + (6S)-5,6,7,8-tetrahydrofolate + NADP(+). Functionally, catalyzes the folate-dependent formation of 5-methyl-uridine at position 54 (M-5-U54) in all tRNAs. In Ruegeria pomeroyi (strain ATCC 700808 / DSM 15171 / DSS-3) (Silicibacter pomeroyi), this protein is Methylenetetrahydrofolate--tRNA-(uracil-5-)-methyltransferase TrmFO.